The following is a 463-amino-acid chain: Lipase 6 (463 aa).

Residues 1-16 form the signal peptide; it reads MRDLILFLSLLHTIFA. A disulfide bridge connects residues C112 and C285. The Charge relay system role is filled by S196. N231 carries an N-linked (GlcNAc...) asparagine glycan. Active-site charge relay system residues include D348 and H381. A disulfide bridge links C364 with C409. N422 is a glycosylation site (N-linked (GlcNAc...) asparagine).

Belongs to the AB hydrolase superfamily. Lipase family. Class Lip subfamily.

It localises to the secreted. The catalysed reaction is a triacylglycerol + H2O = a diacylglycerol + a fatty acid + H(+). Secreted lipase that is able to hydrolyze both the neutral triacylglycerols and the monopalmitate ester Tween 40, allowing the use of hydrolyzed products as carbon sources. Has broad lipolytic activity, which may be important for colonization and subsequent infection, therefore contributing to the persistence and virulence in human tissue. This is Lipase 6 from Candida albicans (strain SC5314 / ATCC MYA-2876) (Yeast).